The chain runs to 101 residues: Small ribosomal subunit protein uS14 (101 aa).

The protein belongs to the universal ribosomal protein uS14 family. As to quaternary structure, part of the 30S ribosomal subunit. Contacts proteins S3 and S10.

Its function is as follows. Binds 16S rRNA, required for the assembly of 30S particles and may also be responsible for determining the conformation of the 16S rRNA at the A site. The sequence is that of Small ribosomal subunit protein uS14 from Pseudomonas syringae pv. tomato (strain ATCC BAA-871 / DC3000).